The following is a 156-amino-acid chain: MLKITIITLGNKMPDWVNSGVNEYAKRFHDGIQIKLIEIPLLRRNKSSDLARILEKESALIKDALPANARLIALDMLGKSFSSEELALKLTQLQQISSHLCFIIGGPEGLSNEILTLCDERWSLSKLTLPHPLVRIILLESLYRAWSIINNHPYHK.

S-adenosyl-L-methionine-binding positions include Leu74, Gly105, and 124-129 (LSKLTL).

The protein belongs to the RNA methyltransferase RlmH family. In terms of assembly, homodimer.

The protein localises to the cytoplasm. The enzyme catalyses pseudouridine(1915) in 23S rRNA + S-adenosyl-L-methionine = N(3)-methylpseudouridine(1915) in 23S rRNA + S-adenosyl-L-homocysteine + H(+). Its function is as follows. Specifically methylates the pseudouridine at position 1915 (m3Psi1915) in 23S rRNA. This is Ribosomal RNA large subunit methyltransferase H from Legionella pneumophila (strain Paris).